Reading from the N-terminus, the 872-residue chain is Paramyosin (872 aa).

The segment at 1-31 is nonhelical region; the sequence is MSLYRSPSAALLKSPSQAAFGAPFGSMSVAD. Positions 32-851 form a coiled coil; it reads LGSLTRLEDK…ESSLHLIRAK (820 aa). The interval 294-376 is interaction with unc-89; it reads EITQWKSKFD…ALLERAREQL (83 aa). Positions 856–866 are nonhelical region; that stretch reads VVTGKSSSKIF.

Belongs to the paramyosin family. In terms of assembly, homodimer. May interact with unc-89 (via SH3 domain). Post-translationally, phosphorylated on serine residues in the N-terminal non-helical region. In terms of tissue distribution, expressed in body wall muscles of larvae and adults (at protein level). Expressed in gonadal myoepithelial sheath cells (at protein level).

It is found in the cytoplasm. Its subcellular location is the myofibril. The protein localises to the sarcomere. It localises to the a band. Functionally, structural component of the muscle thick filaments which is involved in assembly and organization of sarcomere myofilaments. Involved in ovulation. Plays a role in the formation of muscle connections, also called muscle arm extensions, between the body wall and the motor axons in the dorsal and ventral cord. This chain is Paramyosin (unc-15), found in Caenorhabditis elegans.